The chain runs to 556 residues: Urocanate hydratase (556 aa).

Residues 52 to 53 (GG), Gln130, 176 to 178 (GMG), Glu196, Arg201, 242 to 243 (NA), 263 to 267 (QTSAH), 273 to 274 (YL), and Tyr322 contribute to the NAD(+) site. The active site involves Cys410. Gly492 serves as a coordination point for NAD(+).

Belongs to the urocanase family. Requires NAD(+) as cofactor.

The protein localises to the cytoplasm. The catalysed reaction is 4-imidazolone-5-propanoate = trans-urocanate + H2O. The protein operates within amino-acid degradation; L-histidine degradation into L-glutamate; N-formimidoyl-L-glutamate from L-histidine: step 2/3. Catalyzes the conversion of urocanate to 4-imidazolone-5-propionate. The protein is Urocanate hydratase of Shewanella sp. (strain ANA-3).